A 245-amino-acid chain; its full sequence is 1-(5-phosphoribosyl)-5-[(5-phosphoribosylamino)methylideneamino] imidazole-4-carboxamide isomerase (245 aa).

The active-site Proton acceptor is the Asp11. The Proton donor role is filled by Asp132.

This sequence belongs to the HisA/HisF family.

It localises to the cytoplasm. It catalyses the reaction 1-(5-phospho-beta-D-ribosyl)-5-[(5-phospho-beta-D-ribosylamino)methylideneamino]imidazole-4-carboxamide = 5-[(5-phospho-1-deoxy-D-ribulos-1-ylimino)methylamino]-1-(5-phospho-beta-D-ribosyl)imidazole-4-carboxamide. Its pathway is amino-acid biosynthesis; L-histidine biosynthesis; L-histidine from 5-phospho-alpha-D-ribose 1-diphosphate: step 4/9. The chain is 1-(5-phosphoribosyl)-5-[(5-phosphoribosylamino)methylideneamino] imidazole-4-carboxamide isomerase from Bacillus pumilus (strain SAFR-032).